The chain runs to 845 residues: uncharacterized protein (845 aa).

A compositionally biased stretch (polar residues) spans 224–241; sequence SNNIPTGIQDSSKYTVNG. Disordered regions lie at residues 224-244, 324-346, 383-434, 456-485, 519-619, 674-701, and 739-785; these read SNNI…GPTE, QGTE…ANNG, RTAN…EGSA, VKAS…ATLN, NMTL…PKNS, VVSR…DSSP, and RKST…ANKS. Residues 390-399 show a composition bias toward basic and acidic residues; that stretch reads PTKKSNRSEQ. The segment covering 400-422 has biased composition (polar residues); the sequence is SKTVANTNVGSKNGTTPRSFAQK. The segment covering 534-546 has biased composition (basic and acidic residues); that stretch reads NSWRSKYLSEGKN. Low complexity predominate over residues 563 to 576; sequence SSLASPTKSSASPL. Phosphoserine is present on serine 567. Basic and acidic residues-rich tracts occupy residues 579-588 and 600-614; these read APKETPERLC and ANLK…KSDI. Composition is skewed to polar residues over residues 674–683, 691–701, and 743–760; these read VVSRTVTSPK, SKASYNQDSSP, and ADSL…TPKA.

The protein resides in the mitochondrion. This is an uncharacterized protein from Schizosaccharomyces pombe (strain 972 / ATCC 24843) (Fission yeast).